The sequence spans 197 residues: MNEIISAAVLLILIMDPLGNLPIFMSVLKHTEPKRRRAIMVRELLIALLVMLVFLFAGEKILAFLSLRAETVSISGGIILFLIAIKMIFPSASGNSSGLPAGEEPFIVPLAIPLVAGPTILATLMLLSHQYPNQMGHLVIALLLAWGGTFVILLQSSLFLRLLGEKGVNALERLMGLILVMMATQMFLDGIRMWMKG.

Residues 1-3 (MNE) lie on the Periplasmic side of the membrane. The helical transmembrane segment at 4 to 24 (IISAAVLLILIMDPLGNLPIF) threads the bilayer. The Cytoplasmic segment spans residues 25 to 44 (MSVLKHTEPKRRRAIMVREL). The helical transmembrane segment at 45-65 (LIALLVMLVFLFAGEKILAFL) threads the bilayer. At 66–71 (SLRAET) the chain is on the periplasmic side. The helical transmembrane segment at 72–92 (VSISGGIILFLIAIKMIFPSA) threads the bilayer. The Cytoplasmic segment spans residues 93 to 105 (SGNSSGLPAGEEP). The helical transmembrane segment at 106–126 (FIVPLAIPLVAGPTILATLML) threads the bilayer. Residues 127–138 (LSHQYPNQMGHL) are Periplasmic-facing. The chain crosses the membrane as a helical span at residues 139–159 (VIALLLAWGGTFVILLQSSLF). The Cytoplasmic portion of the chain corresponds to 160–173 (LRLLGEKGVNALER). A helical transmembrane segment spans residues 174–194 (LMGLILVMMATQMFLDGIRMW). At 195–197 (MKG) the chain is on the periplasmic side.

It belongs to the UPF0056 (MarC) family.

The protein localises to the cell inner membrane. In Escherichia coli O157:H7, this protein is UPF0056 inner membrane protein YhgN (yhgN).